A 202-amino-acid polypeptide reads, in one-letter code: Urease accessory protein UreG (202 aa).

11 to 18 provides a ligand contact to GTP; sequence GPVGSGKT.

Belongs to the SIMIBI class G3E GTPase family. UreG subfamily. As to quaternary structure, homodimer. UreD, UreF and UreG form a complex that acts as a GTP-hydrolysis-dependent molecular chaperone, activating the urease apoprotein by helping to assemble the nickel containing metallocenter of UreC. The UreE protein probably delivers the nickel.

The protein localises to the cytoplasm. Its function is as follows. Facilitates the functional incorporation of the urease nickel metallocenter. This process requires GTP hydrolysis, probably effectuated by UreG. This is Urease accessory protein UreG from Magnetococcus marinus (strain ATCC BAA-1437 / JCM 17883 / MC-1).